We begin with the raw amino-acid sequence, 276 residues long: Small ribosomal subunit protein uS2 (276 aa).

The protein belongs to the universal ribosomal protein uS2 family.

The protein is Small ribosomal subunit protein uS2 of Chlamydia abortus (strain DSM 27085 / S26/3) (Chlamydophila abortus).